Reading from the N-terminus, the 660-residue chain is MHNENSVLRDAKESLFNPTPRKQGLPEDNTMTPYNGVRSIFDNSSDSHQLTDDHTHQERAISKAKLANENIAPFLAKHIPSQYAPLGTGISKSAGPPPRPDLKCRRQADEPSMDHLQWELQSLPQSDQQGIAHVWSLFSAAPAKQRELMLRGILAQCCFPQLSLISSSVRDLIRIDFITALPPEISFKILSYLDTASLCRAAQVSRGWKCLADDDVVWHRMCEQHIHRKCTKCGWGLPLLERKRLRASKEQIEKRALGVSVIPEASVTVQSVDATSGVKRTAEDLEASDSQTVKRQRLPIEEDTNIYKTNFRPWKDVYKDRFKVGTNWKYGRCSVKVFKGHTNGVMCLQFEDNILATGSYDTTIKIWDMETGEELRTLTGHTSGIRCLQFDETKLISGSIDRTLKVWNWRTGECISTYTGHLGGIIGLHFQNSILASGSTDKTVKIWNFEDKSTFLLRGHSDWVNAVRVDSCSRTVLSASDDCTVKLWDLDSKQCIRTFQGHVGQVQQVIPLPREFEFEEGHDASHEEDSNASVSGDESPSSQVSCSPTAAFFEGDRPAPPRYILTSALDSTIRLWETYTGRCLRTFFGHLEGVWALSADTLRIVSGAEDRMVKIWDPRTGKCERTFTGHSGPVTCVGLGDSCFVTGSEDCEVRIYSFKN.

Residues 1 to 13 (MHNENSVLRDAKE) are compositionally biased toward basic and acidic residues. Disordered regions lie at residues 1–34 (MHNE…MTPY) and 86–108 (LGTG…RRQA). Residues 175-221 (IDFITALPPEISFKILSYLDTASLCRAAQVSRGWKCLADDDVVWHRM) enclose the F-box domain. WD repeat units follow at residues 340–379 (GHTN…RTLT), 381–419 (HTSG…STYT), 421–457 (HLGG…TFLL), 459–500 (GHSD…RTFQ), 542–586 (SQVS…CLRT), 587–626 (FFGH…CERT), and 629–660 (GHSG…SFKN). The tract at residues 521-553 (GHDASHEEDSNASVSGDESPSSQVSCSPTAAFF) is disordered. Residues 531–548 (NASVSGDESPSSQVSCSP) are compositionally biased toward polar residues.

Belongs to the WD repeat MET30/SCONB/SCON-2 family. Component of the SCF(sconB) E3 ubiquitin ligase complex.

It functions in the pathway protein modification; protein ubiquitination. Component of the SCF(sconB) E3 ubiquitin ligase complex involved in the regulation of sulfur metabolite repression, probably by mediating the inactivation or degradation of the metR transcription factor. The sequence is that of Probable E3 ubiquitin ligase complex SCF subunit sconB (sconB) from Talaromyces marneffei (strain ATCC 18224 / CBS 334.59 / QM 7333) (Penicillium marneffei).